Here is a 126-residue protein sequence, read N- to C-terminus: Small ribosomal subunit protein eS24 (126 aa).

The tract at residues 98 to 126 is disordered; it reads LYTKPQTSRKQRKEKKNRLKKAGKKTAKK. The span at 104 to 126 shows a compositional bias: basic residues; that stretch reads TSRKQRKEKKNRLKKAGKKTAKK.

The protein belongs to the eukaryotic ribosomal protein eS24 family.

The chain is Small ribosomal subunit protein eS24 (rps24) from Dictyostelium discoideum (Social amoeba).